Reading from the N-terminus, the 29-residue chain is Glucagon (29 aa).

The protein belongs to the glucagon family.

It localises to the secreted. Its function is as follows. Glucagon plays a key role in glucose metabolism and homeostasis. Regulates blood glucose by increasing gluconeogenesis and decreasing glycolysis. The chain is Glucagon (GCG) from Struthio camelus (Common ostrich).